Here is a 168-residue protein sequence, read N- to C-terminus: Chorismate pyruvate-lyase (168 aa).

Met36, Arg78, Leu116, and Glu157 together coordinate substrate.

Belongs to the UbiC family. As to quaternary structure, monomer.

The protein resides in the cytoplasm. It carries out the reaction chorismate = 4-hydroxybenzoate + pyruvate. It participates in cofactor biosynthesis; ubiquinone biosynthesis. Removes the pyruvyl group from chorismate, with concomitant aromatization of the ring, to provide 4-hydroxybenzoate (4HB) for the ubiquinone pathway. This is Chorismate pyruvate-lyase from Photorhabdus laumondii subsp. laumondii (strain DSM 15139 / CIP 105565 / TT01) (Photorhabdus luminescens subsp. laumondii).